The sequence spans 524 residues: Cytochrome P450 4F1 (524 aa).

A helical membrane pass occupies residues 15 to 35; sequence VAFPWQTLLLFGASWILAQIL. Heme is bound by residues Glu-328 and Cys-468.

Belongs to the cytochrome P450 family. Heme serves as cofactor. Expressed in liver.

The protein resides in the endoplasmic reticulum membrane. The protein localises to the microsome membrane. It carries out the reaction (5Z,8Z,11Z,14Z)-eicosatetraenoate + reduced [NADPH--hemoprotein reductase] + O2 = 20-hydroxy-(5Z,8Z,11Z,14Z)-eicosatetraenoate + oxidized [NADPH--hemoprotein reductase] + H2O + H(+). The catalysed reaction is 5-hydroxy-(6E,8Z,11Z,14Z)-eicosatetraenoate + reduced [NADPH--hemoprotein reductase] + O2 = 5,20-dihydroxy-(6E,8Z,11Z,14Z)-eicosatetraenoate + oxidized [NADPH--hemoprotein reductase] + H2O + H(+). The enzyme catalyses 8-hydroxy-(5Z,9E,11Z,14Z)-eicosatetraenoate + reduced [NADPH--hemoprotein reductase] + O2 = 8,20-dihydroxy-(5Z,9E,11Z,14Z)-eicosatetraenoate + oxidized [NADPH--hemoprotein reductase] + H2O + H(+). It catalyses the reaction leukotriene B4 + reduced [NADPH--hemoprotein reductase] + O2 = 20-hydroxy-leukotriene B4 + oxidized [NADPH--hemoprotein reductase] + H2O + H(+). It carries out the reaction 6-trans-leukotriene B4 + reduced [NADPH--hemoprotein reductase] + O2 = 20-hydroxy-6-trans-leukotriene B4 + oxidized [NADPH--hemoprotein reductase] + H2O + H(+). The catalysed reaction is lipoxin A4 + reduced [NADPH--hemoprotein reductase] + O2 = 20-hydroxy-lipoxin A4 + oxidized [NADPH--hemoprotein reductase] + H2O + H(+). Its function is as follows. A cytochrome P450 monooxygenase involved in the metabolism of arachidonic acid and its oxygenated derivatives. Mechanistically, uses molecular oxygen inserting one oxygen atom into a substrate, and reducing the second into a water molecule, with two electrons provided by NADPH via cytochrome P450 reductase (CPR; NADPH-ferrihemoprotein reductase). Participates in the conversion of arachidonic acid to omega-hydroxyeicosatetraenoic acid (20-HETE), a signaling molecule acting both as vasoconstrictive and natriuretic with overall effect on arterial blood pressure. May play a role in the oxidative inactivation of eicosanoids, including both pro-inflammatory and anti-inflammatory mediators such as leukotriene B4 (LTB4), lipoxin A4 (LXA4), and several HETEs. This chain is Cytochrome P450 4F1, found in Rattus norvegicus (Rat).